Here is a 277-residue protein sequence, read N- to C-terminus: Large ribosomal subunit protein uL2 (277 aa).

Disordered regions lie at residues I24–G55 and R221–K277.

The protein belongs to the universal ribosomal protein uL2 family. In terms of assembly, part of the 50S ribosomal subunit. Forms a bridge to the 30S subunit in the 70S ribosome.

Functionally, one of the primary rRNA binding proteins. Required for association of the 30S and 50S subunits to form the 70S ribosome, for tRNA binding and peptide bond formation. It has been suggested to have peptidyltransferase activity; this is somewhat controversial. Makes several contacts with the 16S rRNA in the 70S ribosome. The chain is Large ribosomal subunit protein uL2 from Listeria innocua serovar 6a (strain ATCC BAA-680 / CLIP 11262).